Consider the following 189-residue polypeptide: Riboflavin transporter RibU (189 aa).

At 1–9 (MNGRRKLNM) the chain is on the cytoplasmic side. Residues 10–29 (QQNKRLITISMLSAIAFVLT) traverse the membrane as a helical segment. The Periplasmic portion of the chain corresponds to 30 to 44 (FIKFPIPFLPPYLTL). The helical intramembrane region spans 45–56 (DFSDVPSLLATF). Residues 57–58 (TF) are Cytoplasmic-facing. A helical membrane pass occupies residues 59–78 (GPVAGIIVALVKNLLNYLFS). Residues 79–82 (MGDP) are Periplasmic-facing. A helical transmembrane segment spans residues 83 to 104 (VGPFANFLAGASFLLTAYAIYK). The Cytoplasmic portion of the chain corresponds to 105 to 107 (NKR). The helical transmembrane segment at 108-132 (STKSLITGLIIATIVMTIVLSILNY) threads the bilayer. Topologically, residues 133–159 (FVLLPLYGMIFNLADIANNLKVIIVSG) are periplasmic. A helical membrane pass occupies residues 160-182 (IIPFNIIKGIVISIVFILLYRRL). Topologically, residues 183–189 (ANFLKRI) are cytoplasmic.

It belongs to the prokaryotic riboflavin transporter (P-RFT) (TC 2.A.87) family. As to quaternary structure, forms a stable energy-coupling factor (ECF) transporter complex composed of a membrane-embedded substrate-binding protein (S component), 2 ATP-binding proteins (A component) and 2 transmembrane proteins (T component). May be able to interact with more than 1 S component at a time.

The protein localises to the cell membrane. In terms of biological role, mediates riboflavin uptake, may also transport FMN and roseoflavin. Probably a riboflavin-binding protein that interacts with the energy-coupling factor (ECF) ABC-transporter complex. Unlike classic ABC transporters this ECF transporter provides the energy necessary to transport a number of different substrates. The substrates themselves are bound by transmembrane, not extracytoplasmic soluble proteins. This is Riboflavin transporter RibU (ribU) from Staphylococcus aureus (strain TCH60).